A 399-amino-acid chain; its full sequence is [Pyruvate dehydrogenase (acetyl-transferring)] kinase, mitochondrial (399 aa).

A mitochondrion-targeting transit peptide spans 1–18; the sequence is MFLTRRLLGPFTSAIARK. The Histidine kinase domain maps to 123–360; sequence VVETMAEGLI…DAMIFLKAIP (238 aa). ATP-binding positions include 247–254, D286, 305–306, and 321–326; these read ELFKNSMR, ST, and GYGYGL.

This sequence belongs to the PDK/BCKDK protein kinase family.

It is found in the mitochondrion matrix. The catalysed reaction is L-seryl-[pyruvate dehydrogenase E1 alpha subunit] + ATP = O-phospho-L-seryl-[pyruvate dehydrogenase E1 alpha subunit] + ADP + H(+). Inhibits the mitochondrial pyruvate dehydrogenase complex by phosphorylation of the E1 alpha subunit, thus contributing to the regulation of glucose metabolism. This is [Pyruvate dehydrogenase (acetyl-transferring)] kinase, mitochondrial from Ascaris suum (Pig roundworm).